Here is a 295-residue protein sequence, read N- to C-terminus: MMKKCPSELQLEAFIREEAGAGDRKPGVLSPGDGARKSGLFSPGDGEMSVLDQSTLDGSGGGHQLWWPESVRTPPRAAAAFSATADERTPASISDDPKPTTSANHAPESDSDSDCDSLLEAERSPRLRGTKSTETKRIRRMVSNRESARRSRRRKQAQLSELESQVEQLKGENSSLFKQLTESSQQFNTAVTDNRILKSDVEALRVKVKMAEDMVARAAMSCGLGQLGLAPLLSSRKMCQALDMLSLPRNDACGFKGLNLGRQVQNSPVQSAASLESLDNRISSEVTSCSADVWP.

Positions arginine 16–proline 26 are enriched in basic and acidic residues. Positions arginine 16 to alanine 157 are disordered. Acidic residues predominate over residues serine 109 to leucine 119. Positions glutamate 120–lysine 136 are enriched in basic and acidic residues. One can recognise a bZIP domain in the interval glutamate 134 to leucine 197. Residues lysine 136–lysine 155 form a basic motif region. Residues leucine 162 to leucine 176 form a leucine-zipper region.

In terms of assembly, homodimer.

The protein resides in the nucleus. In terms of biological role, probable transcription factor that binds to the DNA specific sequence 5'-TGAGTCA-3' found in seed storage protein gene promoters. May function as a negative regulator in cold and drought stress responses. The chain is bZIP transcription factor RISBZ5 from Oryza sativa subsp. japonica (Rice).